We begin with the raw amino-acid sequence, 175 residues long: ATP synthase subunit delta (175 aa).

This sequence belongs to the ATPase delta chain family. In terms of assembly, F-type ATPases have 2 components, F(1) - the catalytic core - and F(0) - the membrane proton channel. F(1) has five subunits: alpha(3), beta(3), gamma(1), delta(1), epsilon(1). F(0) has three main subunits: a(1), b(2) and c(10-14). The alpha and beta chains form an alternating ring which encloses part of the gamma chain. F(1) is attached to F(0) by a central stalk formed by the gamma and epsilon chains, while a peripheral stalk is formed by the delta and b chains.

Its subcellular location is the cell inner membrane. In terms of biological role, f(1)F(0) ATP synthase produces ATP from ADP in the presence of a proton or sodium gradient. F-type ATPases consist of two structural domains, F(1) containing the extramembraneous catalytic core and F(0) containing the membrane proton channel, linked together by a central stalk and a peripheral stalk. During catalysis, ATP synthesis in the catalytic domain of F(1) is coupled via a rotary mechanism of the central stalk subunits to proton translocation. This protein is part of the stalk that links CF(0) to CF(1). It either transmits conformational changes from CF(0) to CF(1) or is implicated in proton conduction. The chain is ATP synthase subunit delta from Xanthomonas oryzae pv. oryzae (strain PXO99A).